We begin with the raw amino-acid sequence, 139 residues long: Aspartate 1-decarboxylase (139 aa).

Residue S25 is the Schiff-base intermediate with substrate; via pyruvic acid of the active site. S25 bears the Pyruvic acid (Ser) mark. T57 lines the substrate pocket. Y58 serves as the catalytic Proton donor. 73–75 (GAA) contributes to the substrate binding site. The segment at 117 to 139 (LGADPAEPVPGSDQARSPQAVTA) is disordered. Residues 130-139 (QARSPQAVTA) are compositionally biased toward polar residues.

The protein belongs to the PanD family. Heterooctamer of four alpha and four beta subunits. It depends on pyruvate as a cofactor. Is synthesized initially as an inactive proenzyme, which is activated by self-cleavage at a specific serine bond to produce a beta-subunit with a hydroxyl group at its C-terminus and an alpha-subunit with a pyruvoyl group at its N-terminus.

The protein resides in the cytoplasm. It catalyses the reaction L-aspartate + H(+) = beta-alanine + CO2. The protein operates within cofactor biosynthesis; (R)-pantothenate biosynthesis; beta-alanine from L-aspartate: step 1/1. Its function is as follows. Catalyzes the pyruvoyl-dependent decarboxylation of aspartate to produce beta-alanine. This chain is Aspartate 1-decarboxylase, found in Streptomyces avermitilis (strain ATCC 31267 / DSM 46492 / JCM 5070 / NBRC 14893 / NCIMB 12804 / NRRL 8165 / MA-4680).